The primary structure comprises 241 residues: Probable transcriptional regulatory protein RSc2190 (241 aa).

It belongs to the TACO1 family.

It is found in the cytoplasm. The chain is Probable transcriptional regulatory protein RSc2190 from Ralstonia nicotianae (strain ATCC BAA-1114 / GMI1000) (Ralstonia solanacearum).